Here is a 478-residue protein sequence, read N- to C-terminus: UDP-N-acetylmuramate--L-alanine ligase (478 aa).

ATP is bound at residue 130 to 136 (GTHGKTT).

The protein belongs to the MurCDEF family.

The protein localises to the cytoplasm. The enzyme catalyses UDP-N-acetyl-alpha-D-muramate + L-alanine + ATP = UDP-N-acetyl-alpha-D-muramoyl-L-alanine + ADP + phosphate + H(+). It participates in cell wall biogenesis; peptidoglycan biosynthesis. Cell wall formation. This is UDP-N-acetylmuramate--L-alanine ligase from Microcystis aeruginosa (strain NIES-843 / IAM M-2473).